A 190-amino-acid polypeptide reads, in one-letter code: Shikimate kinase (190 aa).

14–19 (GAGKST) is a binding site for ATP. Ser18 lines the Mg(2+) pocket. Asp36, Arg60, and Gly82 together coordinate substrate. Arg120 provides a ligand contact to ATP. Residue Arg139 participates in substrate binding.

Belongs to the shikimate kinase family. As to quaternary structure, monomer. Mg(2+) serves as cofactor.

It localises to the cytoplasm. The enzyme catalyses shikimate + ATP = 3-phosphoshikimate + ADP + H(+). The protein operates within metabolic intermediate biosynthesis; chorismate biosynthesis; chorismate from D-erythrose 4-phosphate and phosphoenolpyruvate: step 5/7. In terms of biological role, catalyzes the specific phosphorylation of the 3-hydroxyl group of shikimic acid using ATP as a cosubstrate. The polypeptide is Shikimate kinase (Thioalkalivibrio sulfidiphilus (strain HL-EbGR7)).